Reading from the N-terminus, the 1426-residue chain is Epidermal growth factor receptor (1426 aa).

Residues 1–30 form the signal peptide; that stretch reads MLLRRRNGPCPFPLLLLLLAHCICIWPASA. Residues 31–868 lie on the Extracellular side of the membrane; sequence ARDRYARQNN…SKITANLDVN (838 aa). N-linked (GlcNAc...) asparagine glycosylation is found at asparagine 128, asparagine 241, asparagine 419, asparagine 443, asparagine 482, asparagine 569, asparagine 599, asparagine 617, asparagine 816, asparagine 823, and asparagine 828. The chain crosses the membrane as a helical span at residues 869-889; that stretch reads MIFIITGAVLVPTICILCVVT. Residues 890–1426 are Cytoplasmic-facing; that stretch reads YICRQKQKAK…HRNRNTETRV (537 aa). Threonine 902 bears the Phosphothreonine; by PKC mark. Residues 938-1198 enclose the Protein kinase domain; sequence LRKGGVLGMG…QLTTVFAEFA (261 aa). ATP is bound by residues 944–952 and lysine 971; that span reads LGMGAFGRV. Catalysis depends on aspartate 1063, which acts as the Proton acceptor. Positions 1232–1297 are disordered; the sequence is PTTDGSEAIA…DSSAREVGVG (66 aa). The span at 1257-1276 shows a compositional bias: basic and acidic residues; the sequence is HRTDCTDEMPKLNRYCKDPS. Tyrosine 1310 is subject to Phosphotyrosine; by autocatalysis.

Belongs to the protein kinase superfamily. Tyr protein kinase family. EGF receptor subfamily. Homodimer. Binding of the ligand spitz triggers homodimerization of the receptor however, it is able to form dimers, albeit weakly, in the absence of spitz. Interacts (when phosphorylated on tyrosine residues) with Vav (via SH2 domain). Interacts (when ubiquitinated) with Graf. May interact (when phosphorylated) with EGFRAP (via SH2 domain). Ubiquitination by Cbl in response to high spi, promotes its interaction with Graf and thus facilitates its GPI-enriched endocytic compartment (GEEC) mediated endocytosis and its subsequent degradation. Ubiquitously expressed in embryos. In larvae, uniform expression is seen in wing disks, genital disk, anlagen of testis and ovary, and brain cortex. In eye-antenna disk, highest expression is anterior to morphogenetic furrow, levels remain high in photoreceptor precursor cells. This pattern is reversed in posterior eye disk. In adults expression is high in brain cortex and thoracic and abdominal ganglia.

It is found in the membrane. The enzyme catalyses L-tyrosyl-[protein] + ATP = O-phospho-L-tyrosyl-[protein] + ADP + H(+). Its function is as follows. Receptor tyrosine kinase, binding ligands of the EGF family and activating several signaling cascades to convert extracellular cues into appropriate cellular responses. Known ligands include spitz, gurken, vein and giant-lens. Transduces the signal through the ras-raf-MAPK pathway. Critical for the proliferation of imaginal tissues, and for the determination of both the antero-posterior and dorso-ventral polarities of the oocyte. In the embryo, plays a role in the establishment of ventral cell fates, maintenance of amnioserosa and ventral neuroectodermal cells, germ band retraction, cell fate specification in the central nervous system, and production and repair of the cuticle. During dorsal closure (DC) functions with the dpp- and ACK-signaling pathways to regulate expression of the myosin zip in the embryonic epidermis and amnioserosa (AS), and thus coordinate the progression of epidermal cell shape changes required for correct DC. In the embryonic epidermis, functions by negatively regulating dpp and consequently the dpp-dependent expression of the myosin zip. In the AS, negatively regulates the production/ and or secretion of a diffusible signal which, is produced by the ACK-signaling pathway, and acts in the AS and epidermal cells to promote zip expression. Also required in the AS to inhibit or delay apoptosis, and consequently slow the rate of DC. Therefore functions at multiple levels to negatively regulate morphogenesis during DC, suggesting that it acts as a general brake mechanism for adjusting the rate of dorsal closure to ensure that closure proceeds smoothly and without loss of epidermal integrity. During oogenesis, one of two tyrosine kinase chemoattractant receptors (Egfr and Pvr), that function in the border cells (BC) to detect guidance cues from the oocyte and transduce this information to the guidance pathway that regulate the collective migration of the BC cluster through the nurse cells to the oocyte. This chain is Epidermal growth factor receptor (Egfr), found in Drosophila melanogaster (Fruit fly).